The following is a 479-amino-acid chain: Monodehydroascorbate reductase 1, peroxisomal (479 aa).

Over 1 to 3 (MGR) the chain is Cytoplasmic. Residues 4–24 (AFEYVILGGGVAAGYAALEFV) form a helical membrane-spanning segment. Residues 12–15 (GGVA), glutamate 41, arginine 48, lysine 53, and 147–148 (RN) contribute to the FAD site. The Peroxisomal portion of the chain corresponds to 25 to 445 (RRNGGASSQE…QATGGGGKPT (421 aa)). Residues 172–178 (GGYIGME), arginine 202, and glycine 260 contribute to the NAD(+) site. Residues 174–178 (YIGME), arginine 202, and glycine 260 each bind NADP(+). Residue aspartate 297 participates in FAD binding. 314 to 315 (EH) contributes to the NAD(+) binding site. 314-315 (EH) serves as a coordination point for NADP(+). Valine 316 lines the FAD pocket. Arginine 320 contacts L-ascorbate. Tyrosine 347 contacts FAD. Position 347 (tyrosine 347) interacts with NAD(+). Tyrosine 347 is an NADP(+) binding site. Arginine 349 contributes to the L-ascorbate binding site. The helical transmembrane segment at 446-466 (CAWHATVGVAAAVSIAAFACW) threads the bilayer. At 467–479 (YGWQAPYVLKRDF) the chain is on the cytoplasmic side.

Belongs to the FAD-dependent oxidoreductase family. The cofactor is FAD.

Its subcellular location is the peroxisome membrane. The enzyme catalyses 2 monodehydro-L-ascorbate radical + NADH + H(+) = 2 L-ascorbate + NAD(+). Catalyzes the conversion of monodehydroascorbate to ascorbate, oxidizing NADH in the process. Ascorbate is a major antioxidant against reactive oxygen species (ROS) and nitric oxide (NO). This Oryza sativa subsp. japonica (Rice) protein is Monodehydroascorbate reductase 1, peroxisomal.